We begin with the raw amino-acid sequence, 267 residues long: MRLIPLQTSEQVSRWAARHIAERINRFQPTADRPFVLGLPTGGTPLQTYKELIRLYQAGEVSFQHVVTFNMDEYVGLPKEHPQSYHTFMYRNFFDHIDIQPQNINILNGNTEDHDAECRRYEEKIKSYGKIHLFMGGVGVDGHIAFNEPASSLGSRTRIKTLTEDTLIANSRFFDNDITKVPKYALTVGVATLLDAEEVMLLITGYNKALALQACVEGSVNHMWTVSALQLHKRGIVVCDEPATQELKVKTVKYFTQLETQAIQSVL.

The active-site Proton acceptor; for enolization step is the D72. Residue D141 is the For ring-opening step of the active site. The active-site Proton acceptor; for ring-opening step is H143. The For ring-opening step role is filled by E148.

The protein belongs to the glucosamine/galactosamine-6-phosphate isomerase family. NagB subfamily. Homohexamer.

The catalysed reaction is alpha-D-glucosamine 6-phosphate + H2O = beta-D-fructose 6-phosphate + NH4(+). The protein operates within amino-sugar metabolism; N-acetylneuraminate degradation; D-fructose 6-phosphate from N-acetylneuraminate: step 5/5. With respect to regulation, allosterically activated by N-acetylglucosamine 6-phosphate (GlcNAc6P). Catalyzes the reversible isomerization-deamination of glucosamine 6-phosphate (GlcN6P) to form fructose 6-phosphate (Fru6P) and ammonium ion. This Actinobacillus pleuropneumoniae serotype 3 (strain JL03) protein is Glucosamine-6-phosphate deaminase.